The primary structure comprises 225 residues: uncharacterized protein (225 aa).

A helical membrane pass occupies residues 181-203 (INIFVVFMFIIYLLFYIISSTVF).

It localises to the cell membrane. This is an uncharacterized protein from Bacillus anthracis.